A 392-amino-acid polypeptide reads, in one-letter code: Probable inactive serine/threonine-protein kinase DDB_G0280855 (392 aa).

Residues 46 to 349 (ITKKTIYACD…IERIIQHPYF (304 aa)) enclose the Protein kinase domain. Residues 52 to 60 (YACDINGTM) and lysine 75 contribute to the ATP site.

Belongs to the protein kinase superfamily. CMGC Ser/Thr protein kinase family. MAP kinase subfamily.

This Dictyostelium discoideum (Social amoeba) protein is Probable inactive serine/threonine-protein kinase DDB_G0280855.